A 400-amino-acid polypeptide reads, in one-letter code: CinA-like protein (400 aa).

This sequence belongs to the CinA family.

The sequence is that of CinA-like protein from Escherichia coli (strain SE11).